The chain runs to 361 residues: Queuine tRNA-ribosyltransferase (361 aa).

Residue D92 is the Proton acceptor of the active site. Substrate is bound by residues 92 to 96 (DSGGF), D146, Q189, and G216. Residues 247–253 (GVGKPAD) are RNA binding. D266 acts as the Nucleophile in catalysis. The tract at residues 271 to 275 (TRSGR) is RNA binding; important for wobble base 34 recognition. The Zn(2+) site is built by C304, C306, C309, and H335.

It belongs to the queuine tRNA-ribosyltransferase family. As to quaternary structure, homodimer. Within each dimer, one monomer is responsible for RNA recognition and catalysis, while the other monomer binds to the replacement base PreQ1. The cofactor is Zn(2+).

The enzyme catalyses 7-aminomethyl-7-carbaguanine + guanosine(34) in tRNA = 7-aminomethyl-7-carbaguanosine(34) in tRNA + guanine. The protein operates within tRNA modification; tRNA-queuosine biosynthesis. In terms of biological role, catalyzes the base-exchange of a guanine (G) residue with the queuine precursor 7-aminomethyl-7-deazaguanine (PreQ1) at position 34 (anticodon wobble position) in tRNAs with GU(N) anticodons (tRNA-Asp, -Asn, -His and -Tyr). Catalysis occurs through a double-displacement mechanism. The nucleophile active site attacks the C1' of nucleotide 34 to detach the guanine base from the RNA, forming a covalent enzyme-RNA intermediate. The proton acceptor active site deprotonates the incoming PreQ1, allowing a nucleophilic attack on the C1' of the ribose to form the product. After dissociation, two additional enzymatic reactions on the tRNA convert PreQ1 to queuine (Q), resulting in the hypermodified nucleoside queuosine (7-(((4,5-cis-dihydroxy-2-cyclopenten-1-yl)amino)methyl)-7-deazaguanosine). In Rickettsia canadensis (strain McKiel), this protein is Queuine tRNA-ribosyltransferase.